The sequence spans 477 residues: Glycogen synthase (477 aa).

Lysine 15 contributes to the ADP-alpha-D-glucose binding site.

Belongs to the glycosyltransferase 1 family. Bacterial/plant glycogen synthase subfamily.

The catalysed reaction is [(1-&gt;4)-alpha-D-glucosyl](n) + ADP-alpha-D-glucose = [(1-&gt;4)-alpha-D-glucosyl](n+1) + ADP + H(+). Its pathway is glycan biosynthesis; glycogen biosynthesis. Synthesizes alpha-1,4-glucan chains using ADP-glucose. The chain is Glycogen synthase from Klebsiella pneumoniae (strain 342).